Reading from the N-terminus, the 331-residue chain is Phosphatidylinositol transfer protein 4 (331 aa).

It belongs to the PtdIns transfer protein family. PI transfer class IIA subfamily.

In terms of biological role, catalyzes the transfer of PtdIns and phosphatidylcholine between membranes. The sequence is that of Phosphatidylinositol transfer protein 4 (pitD) from Dictyostelium discoideum (Social amoeba).